We begin with the raw amino-acid sequence, 308 residues long: MSSPKKIVIASRESQLALWQANFIRGRLLELYPQTDITILGMTTKGDQILDVSLSKIGGKGLFIKELELALEDGRADIAVHSMKDVPMIVPSGFTLAAITEREDPRDAFVSNDFSSLEELPAGSVVGTSSLRRESQLRARFPHLQVRPLRGNVQTRLRKLDEGEYSAIILAAAGLKRLELGYRISMLLPPELSLPAVGQGALGIECRDNDPDMVEWMKPLHHAATACCVEAERAMSRMLGGSCQVPLGGFAEIFEDVLTLRGFVATPDGSRMIADKLCGKPESGEQVGQQLAQNLKAHGAEEILAALA.

The residue at position 243 (C243) is an S-(dipyrrolylmethanemethyl)cysteine.

The protein belongs to the HMBS family. In terms of assembly, monomer. It depends on dipyrromethane as a cofactor.

The catalysed reaction is 4 porphobilinogen + H2O = hydroxymethylbilane + 4 NH4(+). It participates in porphyrin-containing compound metabolism; protoporphyrin-IX biosynthesis; coproporphyrinogen-III from 5-aminolevulinate: step 2/4. Functionally, tetrapolymerization of the monopyrrole PBG into the hydroxymethylbilane pre-uroporphyrinogen in several discrete steps. The protein is Porphobilinogen deaminase of Nitrosomonas europaea (strain ATCC 19718 / CIP 103999 / KCTC 2705 / NBRC 14298).